Here is a 232-residue protein sequence, read N- to C-terminus: Protein TIFY 10c (232 aa).

The segment at 54–73 is disordered; that stretch reads PPAAGAGGAFRPPPTTMNLL. The region spanning 114 to 149 is the Tify domain; the sequence is AGEKAQQLTIFYGGKVVVFENFPSTKVKDLLQIVST. Positions 151–176 are disordered; that stretch reads DGVDKNTGTAATQSLPRPAHNSLPDL. The span at 156-165 shows a compositional bias: polar residues; sequence NTGTAATQSL. Positions 177–202 match the Jas motif; the sequence is PIARRNSLHRFLEKRKGRMNANAPYQ. The short motif at 179–186 is the Nuclear localization signal element; that stretch reads ARRNSLHR.

It belongs to the TIFY/JAZ family. In terms of assembly, interacts with BHLH148. Interacts with COI1B in a coronatine-dependent manner. Coronatine is an analog of jasmonoyl isoleucine (JA-Ile). Interacts with TIFY5/JAZ2, TIFY6B/JAZ4, TIFY9/JAZ5, TIFY11A, TIFY11D/JAZ12 and TIFY11G/JAZ15. Ubiquitinated. Increase in jasmonoyl isoleucine (JA-Ile) levels mediates its degradation via COI1B-mediated proteasome pathway.

It is found in the nucleus. It localises to the cytoplasm. The protein localises to the cytosol. Its function is as follows. Repressor of jasmonate (JA) responses. Acts as a repressor of JA-induced resistance to the bacterial blight pathogen Xanthomonas oryzae pv. oryzae (Xoo). Regulates JA-induced accumulation of linalool at the transcriptional level of linalool synthase gene LIS. Linalool is important for resistance to bacterial blight pathogen Xoo. The protein is Protein TIFY 10c of Oryza sativa subsp. indica (Rice).